The chain runs to 364 residues: Fructose-bisphosphate aldolase A (364 aa).

The residue at position 5 (Y5) is a Phosphotyrosine. T9 carries the phosphothreonine modification. Residues S36 and S39 each carry the phosphoserine modification. Residue K42 is modified to N6-acetyllysine; alternate. Residue K42 forms a Glycyl lysine isopeptide (Lys-Gly) (interchain with G-Cter in SUMO1); alternate linkage. K42 participates in a covalent cross-link: Glycyl lysine isopeptide (Lys-Gly) (interchain with G-Cter in SUMO2); alternate. R43 lines the beta-D-fructose 1,6-bisphosphate pocket. At S46 the chain carries Phosphoserine. The residue at position 99 (K99) is an N6-(2-hydroxyisobutyryl)lysine. K108 is modified (N6-acetyllysine). Position 111 is an N6-acetyllysine; alternate (K111). At K111 the chain carries N6-malonyllysine; alternate. Position 132 is a phosphoserine (S132). Position 147 is an N6-(2-hydroxyisobutyryl)lysine (K147). The active-site Proton acceptor is the E188. K230 (schiff-base intermediate with dihydroxyacetone-P) is an active-site residue. S272 carries the phosphoserine modification. Beta-D-fructose 1,6-bisphosphate contacts are provided by residues 272-274, S301, and R304; that span reads SGG. K312 carries the N6-malonyllysine modification. K330 carries the post-translational modification N6-acetyllysine.

This sequence belongs to the class I fructose-bisphosphate aldolase family. Homotetramer. Interacts with SNX9 and WAS. Interacts with FBP2; the interaction blocks FBP2 inhibition by physiological concentrations of AMP and reduces inhibition by Ca(2+). As to expression, expressed in muscle, brain and hepatoma cells.

The protein localises to the cytoplasm. It localises to the myofibril. It is found in the sarcomere. The protein resides in the i band. Its subcellular location is the m line. It catalyses the reaction beta-D-fructose 1,6-bisphosphate = D-glyceraldehyde 3-phosphate + dihydroxyacetone phosphate. It participates in carbohydrate degradation; glycolysis; D-glyceraldehyde 3-phosphate and glycerone phosphate from D-glucose: step 4/4. Its function is as follows. Catalyzes the reversible conversion of beta-D-fructose 1,6-bisphosphate (FBP) into two triose phosphate and plays a key role in glycolysis and gluconeogenesis. In addition, may also function as scaffolding protein. The sequence is that of Fructose-bisphosphate aldolase A (Aldoa) from Rattus norvegicus (Rat).